A 240-amino-acid polypeptide reads, in one-letter code: Guanylate kinase (240 aa).

The 181-residue stretch at 56 to 236 (GRIFVITGPS…TLNELKSILL (181 aa)) folds into the Guanylate kinase-like domain. 63–70 (GPSGVGKS) serves as a coordination point for ATP.

This sequence belongs to the guanylate kinase family.

The protein localises to the cytoplasm. The enzyme catalyses GMP + ATP = GDP + ADP. In terms of biological role, essential for recycling GMP and indirectly, cGMP. This Mycoplasma genitalium (strain ATCC 33530 / DSM 19775 / NCTC 10195 / G37) (Mycoplasmoides genitalium) protein is Guanylate kinase (gmk).